A 399-amino-acid chain; its full sequence is Elongation factor Tu (399 aa).

Positions 10 to 208 (KPHVNIGTIG…TVDSYIPEPE (199 aa)) constitute a tr-type G domain. The tract at residues 19 to 26 (GHVDHGKT) is G1. 19 to 26 (GHVDHGKT) is a binding site for GTP. Threonine 26 is a Mg(2+) binding site. Positions 64–68 (GITIN) are G2. The interval 85–88 (DAPG) is G3. Residues 85-89 (DAPGH) and 140-143 (NKVD) contribute to the GTP site. Positions 140–143 (NKVD) are G4. The segment at 178–180 (SAL) is G5.

This sequence belongs to the TRAFAC class translation factor GTPase superfamily. Classic translation factor GTPase family. EF-Tu/EF-1A subfamily. In terms of assembly, monomer.

The protein resides in the cytoplasm. It carries out the reaction GTP + H2O = GDP + phosphate + H(+). In terms of biological role, GTP hydrolase that promotes the GTP-dependent binding of aminoacyl-tRNA to the A-site of ribosomes during protein biosynthesis. The chain is Elongation factor Tu from Streptococcus pyogenes serotype M12 (strain MGAS2096).